Here is a 690-residue protein sequence, read N- to C-terminus: Eukaryotic translation initiation factor 3 subunit B (690 aa).

Residues 1–11 are compositionally biased toward basic and acidic residues; sequence MAKKKSEEHSG. The disordered stretch occupies residues 1–36; sequence MAKKKSEEHSGADANDSDYQEEPNFEDPPGFVDNIS. The segment covering 15 to 25 has biased composition (acidic residues); that stretch reads NDSDYQEEPNF. Residues 57 to 141 form the RRM domain; sequence SVVVVDNIPK…HTFAVNLFTD (85 aa). WD repeat units lie at residues 207–246, 293–331, 334–369, 442–484, and 530–575; these read TRER…KIQK, DGMS…LLDL, IKIP…TLME, EIRE…KPSL, and PDHF…IKRT. The stretch at 595 to 645 forms a coiled coil; sequence EEKQKEIKKNLKKYYAAFEQKDRLRLTRASKELLEKRSQLRETFMEYRNKR.

This sequence belongs to the eIF-3 subunit B family. As to quaternary structure, component of the eukaryotic translation initiation factor 3 (eIF-3) complex. The eIF-3 complex interacts with pix. Interacts with mxt.

It is found in the cytoplasm. Functionally, RNA-binding component of the eukaryotic translation initiation factor 3 (eIF-3) complex, which is involved in protein synthesis of a specialized repertoire of mRNAs and, together with other initiation factors, stimulates binding of mRNA and methionyl-tRNAi to the 40S ribosome. The eIF-3 complex specifically targets and initiates translation of a subset of mRNAs involved in cell proliferation. The polypeptide is Eukaryotic translation initiation factor 3 subunit B (Drosophila simulans (Fruit fly)).